The chain runs to 613 residues: 4-hydroxy-3-methylbut-2-en-1-yl diphosphate synthase (flavodoxin) (613 aa).

[4Fe-4S] cluster-binding residues include C514, C517, C548, and E555.

The protein belongs to the IspG family. [4Fe-4S] cluster serves as cofactor.

It catalyses the reaction (2E)-4-hydroxy-3-methylbut-2-enyl diphosphate + oxidized [flavodoxin] + H2O + 2 H(+) = 2-C-methyl-D-erythritol 2,4-cyclic diphosphate + reduced [flavodoxin]. It functions in the pathway isoprenoid biosynthesis; isopentenyl diphosphate biosynthesis via DXP pathway; isopentenyl diphosphate from 1-deoxy-D-xylulose 5-phosphate: step 5/6. In terms of biological role, converts 2C-methyl-D-erythritol 2,4-cyclodiphosphate (ME-2,4cPP) into 1-hydroxy-2-methyl-2-(E)-butenyl 4-diphosphate. This chain is 4-hydroxy-3-methylbut-2-en-1-yl diphosphate synthase (flavodoxin), found in Chlamydia pneumoniae (Chlamydophila pneumoniae).